The following is a 234-amino-acid chain: Adenosine 5'-phosphosulfate reductase (234 aa).

The [4Fe-4S] cluster site is built by Cys-120, Cys-121, Cys-203, and Cys-206. Cys-229 serves as the catalytic Nucleophile; cysteine thiosulfonate intermediate.

The protein belongs to the PAPS reductase family. CysH subfamily. Requires [4Fe-4S] cluster as cofactor.

It is found in the cytoplasm. The enzyme catalyses [thioredoxin]-disulfide + sulfite + AMP + 2 H(+) = adenosine 5'-phosphosulfate + [thioredoxin]-dithiol. The protein operates within sulfur metabolism; hydrogen sulfide biosynthesis; sulfite from sulfate. In terms of biological role, catalyzes the formation of sulfite from adenosine 5'-phosphosulfate (APS) using thioredoxin as an electron donor. This Bacillus cereus (strain AH187) protein is Adenosine 5'-phosphosulfate reductase.